We begin with the raw amino-acid sequence, 353 residues long: Protein arginine N-methyltransferase 1 (353 aa).

The region spanning 32-353 (KDYYFDSYAH…LSCSTDYRMR (322 aa)) is the SAM-dependent MTase PRMT-type domain. S-adenosyl-L-methionine contacts are provided by histidine 45, arginine 54, glycine 78, and glutamate 100. Lysine 116 carries the post-translational modification N6-succinyllysine. Lysine 127 is covalently cross-linked (Glycyl lysine isopeptide (Lys-Gly) (interchain with G-Cter in ubiquitin)). Glutamate 129 is a binding site for S-adenosyl-L-methionine. Catalysis depends on residues glutamate 144 and glutamate 153. Residues lysine 210 and lysine 215 each carry the N6-acetyllysine modification. Serine 286 and serine 289 each carry phosphoserine.

The protein belongs to the class I-like SAM-binding methyltransferase superfamily. Protein arginine N-methyltransferase family. As to quaternary structure, homodimer and heterodimer with PRMT8. Homooctamer; individual homodimers associates to form a homooctamer. Interacts with NFATC2IP. Interacts with ILF3 and SUPT5H. Individual homodimers can associate to form a homohexamer. Interacts with FOXO1; the interaction methylates FOXO1, retaining it in the nucleus and increasing its transcriptional activity. Methylation of FOXO1 is increased with oxidative stress. Interacts with CHTOP; the interaction methylates CHTOP, enabling its interaction with the 5FMC complex. Interacts with BTG1, BTG2 and IFNAR1. Interacts with and probably methylates ATXN2L. Component of the methylosome, a 20S complex containing at least CLNS1A/pICln, PRMT5/SKB1, WDR77/MEP50, PRMT1 and ERH. Interacts with DHX9 (via RGG region). Interacts (via N-terminus) with HABP4. Interacts with MAP3K5/ASK1; the interaction results in MAP3K5 methylation by PRMT1 which inhibits MAP3K5 activation. Interacts with TRIM48; the interaction results in ubiquitination of PRMT1 by TRIM48, leading to PRMT1 proteasomal degradation and activation of MAP3K5. Interacts with GATOR1 complex; this interaction is S-adenosyl-L-methionine (SAM) dependent and is perturbated by SAMTOR in a SAM-sensitive manner. Interacts with GFI1; promoting recognition and binding of MRE11 and TP53BP1 substrates by PRMT1. In terms of processing, polyubiquitinated at Lys-127 by the SCF(FBXL17) complex, leading to its subsequent degradation. Ubiquitination is regulated by acetylation at Lys-210 and Lys-215. Polyubiquitinated by E3 ubiquitin-protein ligase TRIM48, leading to suppression of MAP3K5/ASK1 methylation and subsequent MAP3K5 activation. Acetylation at Lys-210 and Lys-215 regulates ubiquitination by the SCF(FBXL17) complex. Acetylated at Lys-215 by p300/EP300. Deacetylated at Lys-210 and Lys-215 by SIRT1. Ubiquitous.

It localises to the nucleus. Its subcellular location is the nucleoplasm. It is found in the cytoplasm. The protein resides in the cytosol. The protein localises to the lysosome membrane. The catalysed reaction is L-arginyl-[protein] + 2 S-adenosyl-L-methionine = N(omega),N(omega)-dimethyl-L-arginyl-[protein] + 2 S-adenosyl-L-homocysteine + 2 H(+). It carries out the reaction L-arginyl-[protein] + S-adenosyl-L-methionine = N(omega)-methyl-L-arginyl-[protein] + S-adenosyl-L-homocysteine + H(+). The enzyme catalyses N(omega)-methyl-L-arginyl-[protein] + S-adenosyl-L-methionine = N(omega),N(omega)-dimethyl-L-arginyl-[protein] + S-adenosyl-L-homocysteine + H(+). Functionally, arginine methyltransferase that methylates (mono and asymmetric dimethylation) the guanidino nitrogens of arginyl residues present in proteins such as ESR1, histone H2, H3 and H4, FMR1, ILF3, HNRNPA1, HNRNPD, NFATC2IP, SUPT5H, TAF15, EWS, HABP4, SERBP1, RBM15, FOXO1, CHTOP, MAP3K5/ASK1 and MICU1. Constitutes the main enzyme that mediates monomethylation and asymmetric dimethylation of histone H4 'Arg-3' (H4R3me1 and H4R3me2a, respectively), a specific tag for epigenetic transcriptional activation. May be involved in the regulation of TAF15 transcriptional activity, act as an activator of estrogen receptor (ER)-mediated transactivation, play a key role in neurite outgrowth and act as a negative regulator of megakaryocytic differentiation, by modulating p38 MAPK pathway. Methylates RBM15, promoting ubiquitination and degradation of RBM15. Methylates MRE11 and TP53BP1, promoting the DNA damage response. Methylates FOXO1 and retains it in the nucleus increasing its transcriptional activity. Methylates CHTOP and this methylation is critical for its 5-hydroxymethylcytosine (5hmC)-binding activity. Methylates MAP3K5/ASK1 at 'Arg-85' and 'Arg-87' which promotes association of MAP3K5 with thioredoxin and negatively regulates MAP3K5 association with TRAF2, inhibiting MAP3K5 stimulation and MAP3K5-induced activation of JNK. Methylates H4R3 in genes involved in glioblastomagenesis in a CHTOP- and/or TET1-dependent manner. Plays a role in regulating alternative splicing in the heart. Methylates NPRL2 at 'Arg-78' leading to inhibition of its GTPase activator activity and then the GATOR1 complex and consequently inducing timely mTORC1 activation under methionine-sufficient conditions. The protein is Protein arginine N-methyltransferase 1 of Rattus norvegicus (Rat).